The following is a 350-amino-acid chain: MIRISIDAMGGDHGPEVTLPSLLRVAERRPDARFLIFGREDEARPVLDRLPALADVSDFTHCEVAVRMDDKPSQALRNGRWKSSMWKAIEAVKDGEADVCISAGNTGALMAMSKFCLRTMADIERPAIAAIWPTIRGESIVLDVGATIGADAQQLVDFAILGAAMANALFDIERPTVGLLNVGVEEIKGQEEVKEAGRMLREAALETMQYHGFVEGDDIGKGTVDVVVTEGFSGNIALKTAEGTARQIAEYLRAAMSRTLMARIGYIFARDAFQRLREKMDVRRTNGGVFLGLKGIVVKSHGAADEEGFAAAVELGYEMVKSGLLDKTRATLDLYHARRPVAPAGAVSNA.

The protein belongs to the PlsX family. As to quaternary structure, homodimer. Probably interacts with PlsY.

It is found in the cytoplasm. The catalysed reaction is a fatty acyl-[ACP] + phosphate = an acyl phosphate + holo-[ACP]. It participates in lipid metabolism; phospholipid metabolism. In terms of biological role, catalyzes the reversible formation of acyl-phosphate (acyl-PO(4)) from acyl-[acyl-carrier-protein] (acyl-ACP). This enzyme utilizes acyl-ACP as fatty acyl donor, but not acyl-CoA. The protein is Phosphate acyltransferase of Chelativorans sp. (strain BNC1).